A 210-amino-acid polypeptide reads, in one-letter code: Glutathione S-transferase P (210 aa).

Residues 2–81 enclose the GST N-terminal domain; sequence PPYTIVYFPV…HLGRTLGLYG (80 aa). Tyr-4 is modified (phosphotyrosine; by EGFR). Glutathione-binding positions include Tyr-8, Arg-14, Trp-39, Lys-45, and 52–53; that span reads QL. Thr-62 is modified (phosphothreonine). 65–66 provides a ligand contact to glutathione; the sequence is QS. The 122-residue stretch at 83 to 204 folds into the GST C-terminal domain; the sequence is DQQEAALVDM…ASPEHMNRPI (122 aa). Residues Lys-103 and Lys-116 each carry the N6-succinyllysine modification. Lys-128 is subject to N6-acetyllysine.

Belongs to the GST superfamily. Pi family. As to quaternary structure, homodimer. Interacts with CDK5.

The protein resides in the cytoplasm. The protein localises to the mitochondrion. It localises to the nucleus. It carries out the reaction RX + glutathione = an S-substituted glutathione + a halide anion + H(+). It catalyses the reaction prostaglandin J2 + glutathione = prostaglandin J2-S-(R)-glutathione. The catalysed reaction is prostaglandin J2 + glutathione = prostaglandin J2-S-(S)-glutathione. The enzyme catalyses prostaglandin A2 + glutathione = prostaglandin A2-S-(S)-glutathione. It carries out the reaction 11(S)-hydroxy-14(S),15(S)-epoxy-(5Z,8Z,12E)-eicosatrienoate + glutathione = (11S,15S)-dihydroxy-14(R)-S-glutathionyl-(5Z,8Z,12E)-eicosatrienoate. In terms of biological role, conjugation of reduced glutathione to a wide number of exogenous and endogenous hydrophobic electrophiles. Involved in the formation of glutathione conjugates of both prostaglandin A2 (PGA2) and prostaglandin J2 (PGJ2). Participates in the formation of novel hepoxilin regioisomers. Negatively regulates CDK5 activity via p25/p35 translocation to prevent neurodegeneration. The protein is Glutathione S-transferase P (GSTP1) of Bos taurus (Bovine).